We begin with the raw amino-acid sequence, 68 residues long: Protein transport protein Sec61 subunit gamma (68 aa).

N-acetylmethionine is present on Met1. The Cytoplasmic portion of the chain corresponds to 1–32 (MDQVMQFVEPSRQFVKDSIRLVKRCTKPDRKE). Ser18 is subject to Phosphoserine. Residues 33–61 (FQKIAMATAIGFAIMGFIGFFVKLIHIPI) form a helical membrane-spanning segment. Residues 62 to 68 (NNIIVGG) lie on the Extracellular side of the membrane.

Belongs to the SecE/SEC61-gamma family. In terms of assembly, the SEC61 channel-forming translocon complex consists of channel-forming core components SEC61A1, SEC61B and SEC61G and different auxiliary components such as SEC62 and SEC63. The SEC61 channel associates with the multi-pass translocon (MPT) complex.

It localises to the endoplasmic reticulum membrane. Its function is as follows. Component of SEC61 channel-forming translocon complex that mediates transport of signal peptide-containing precursor polypeptides across the endoplasmic reticulum (ER). Forms a ribosome receptor and a gated pore in the ER membrane, both functions required for cotranslational translocation of nascent polypeptides. The SEC61 channel is also involved in ER membrane insertion of transmembrane proteins: it mediates membrane insertion of the first few transmembrane segments of proteins, while insertion of subsequent transmembrane regions of multi-pass membrane proteins is mediated by the multi-pass translocon (MPT) complex. The SEC61 channel cooperates with the translocating protein TRAM1 to import nascent proteins into the ER. In Bos taurus (Bovine), this protein is Protein transport protein Sec61 subunit gamma (SEC61G).